A 522-amino-acid polypeptide reads, in one-letter code: U4/U6 small nuclear ribonucleoprotein Prp4 (522 aa).

The span at 1 to 13 (MASSRASSTQATK) shows a compositional bias: polar residues. The disordered stretch occupies residues 1 to 20 (MASSRASSTQATKTKAPDDL). At Lys27 the chain carries N6-acetyllysine. 7 WD repeats span residues 229–268 (GDDR…LLHT), 271–318 (GHNT…PVAD), 321–360 (GHTV…EILH), 363–402 (GHSM…CIMF), 405–444 (GHLK…CVYT), 447–487 (AHQN…PLKT), and 490–521 (GHEG…LWMA).

In terms of assembly, component of the precatalytic spliceosome (spliceosome B complex). Component of the U4/U6-U5 tri-snRNP complex, a building block of the precatalytic spliceosome (spliceosome B complex). The U4/U6-U5 tri-snRNP complex is composed of the U4, U6 and U5 snRNAs and at least PRPF3, PRPF4, PRPF6, PRPF8, PRPF31, SNRNP200, TXNL4A, SNRNP40, SNRPB, SNRPD1, SNRPD2, SNRPD3, SNRPE, SNRPF, SNRPG, DDX23, CD2BP2, PPIH, SNU13, EFTUD2, SART1 and USP39, plus LSM2, LSM3, LSM4, LSM5, LSM6, LSM7 and LSM8. Interacts directly with PRPF18, PPIH and PRPF3. Part of a heteromeric complex containing PPIH, PRPF3 and PRPF4 that is stable in the absence of RNA. Interacts with ERCC6.

The protein localises to the nucleus. The protein resides in the nucleus speckle. In terms of biological role, plays a role in pre-mRNA splicing as component of the U4/U6-U5 tri-snRNP complex that is involved in spliceosome assembly, and as component of the precatalytic spliceosome (spliceosome B complex). The sequence is that of U4/U6 small nuclear ribonucleoprotein Prp4 (PRPF4) from Homo sapiens (Human).